Reading from the N-terminus, the 510-residue chain is Histidine ammonia-lyase (510 aa).

The 5-imidazolinone (Ala-Gly) cross-link spans 144–146 (ASG). Serine 145 is modified (2,3-didehydroalanine (Ser)).

It belongs to the PAL/histidase family. In terms of processing, contains an active site 4-methylidene-imidazol-5-one (MIO), which is formed autocatalytically by cyclization and dehydration of residues Ala-Ser-Gly.

Its subcellular location is the cytoplasm. The enzyme catalyses L-histidine = trans-urocanate + NH4(+). It participates in amino-acid degradation; L-histidine degradation into L-glutamate; N-formimidoyl-L-glutamate from L-histidine: step 1/3. This Chromobacterium violaceum (strain ATCC 12472 / DSM 30191 / JCM 1249 / CCUG 213 / NBRC 12614 / NCIMB 9131 / NCTC 9757 / MK) protein is Histidine ammonia-lyase.